A 563-amino-acid polypeptide reads, in one-letter code: CTP synthase (563 aa).

Positions 1–278 (MAKATAKNSA…DLRVLEQLHL (278 aa)) are amidoligase domain. Residue Ser24 participates in CTP binding. Ser24 is a UTP binding site. 25-30 (SLGKGI) serves as a coordination point for ATP. Position 65 (Tyr65) interacts with L-glutamine. Asp82 provides a ligand contact to ATP. Mg(2+)-binding residues include Asp82 and Glu151. Residues 158–160 (DIE), 198–203 (KTKPSQ), and Lys234 contribute to the CTP site. Residues 198 to 203 (KTKPSQ) and Lys234 contribute to the UTP site. Position 250-252 (250-252 (KDV)) interacts with ATP. The Glutamine amidotransferase type-1 domain maps to 303–545 (TIALVGKYIA…VKAALEQKKA (243 aa)). Gly363 serves as a coordination point for L-glutamine. Cys390 serves as the catalytic Nucleophile; for glutamine hydrolysis. L-glutamine contacts are provided by residues 391 to 394 (LGMQ), Glu414, and Arg471. Catalysis depends on residues His518 and Glu520. The tract at residues 542-563 (QKKANGKKPTAPSEKTKKTKTK) is disordered.

The protein belongs to the CTP synthase family. In terms of assembly, homotetramer.

It carries out the reaction UTP + L-glutamine + ATP + H2O = CTP + L-glutamate + ADP + phosphate + 2 H(+). The enzyme catalyses L-glutamine + H2O = L-glutamate + NH4(+). The catalysed reaction is UTP + NH4(+) + ATP = CTP + ADP + phosphate + 2 H(+). Its pathway is pyrimidine metabolism; CTP biosynthesis via de novo pathway; CTP from UDP: step 2/2. With respect to regulation, allosterically activated by GTP, when glutamine is the substrate; GTP has no effect on the reaction when ammonia is the substrate. The allosteric effector GTP functions by stabilizing the protein conformation that binds the tetrahedral intermediate(s) formed during glutamine hydrolysis. Inhibited by the product CTP, via allosteric rather than competitive inhibition. Functionally, catalyzes the ATP-dependent amination of UTP to CTP with either L-glutamine or ammonia as the source of nitrogen. Regulates intracellular CTP levels through interactions with the four ribonucleotide triphosphates. The sequence is that of CTP synthase from Fibrobacter succinogenes (strain ATCC 19169 / S85).